Here is a 130-residue protein sequence, read N- to C-terminus: Small ribosomal subunit protein uS8 (130 aa).

This sequence belongs to the universal ribosomal protein uS8 family. Part of the 30S ribosomal subunit. Contacts proteins S5 and S12.

One of the primary rRNA binding proteins, it binds directly to 16S rRNA central domain where it helps coordinate assembly of the platform of the 30S subunit. The polypeptide is Small ribosomal subunit protein uS8 (Vibrio atlanticus (strain LGP32) (Vibrio splendidus (strain Mel32))).